Here is a 457-residue protein sequence, read N- to C-terminus: UDP-N-acetylmuramate--L-alanine ligase (457 aa).

109–115 is an ATP binding site; that stretch reads GTDGKTT.

This sequence belongs to the MurCDEF family.

Its subcellular location is the cytoplasm. It carries out the reaction UDP-N-acetyl-alpha-D-muramate + L-alanine + ATP = UDP-N-acetyl-alpha-D-muramoyl-L-alanine + ADP + phosphate + H(+). The protein operates within cell wall biogenesis; peptidoglycan biosynthesis. Its function is as follows. Cell wall formation. This is UDP-N-acetylmuramate--L-alanine ligase from Thermotoga sp. (strain RQ2).